We begin with the raw amino-acid sequence, 339 residues long: LRQPSSASNRTAASLDGQETPFQYEITDHGYGKDAVKVLHVSRKGPVHTIQEFEVGTHLKLYSKKDYYQGNNSDIVATDSQKNTVYLLAKKYGIESPEKFALLLGQHFLNKYSHVEEAHVHVETYPWQRVCQEETKASTTVGQGSCNFSSIDNRSLHNHAFIFTPTALHYCDVVIXRQDPKQTVITGIKGLRVLKTTQSSFVNFVNDEXRSLPDQYDRIFSTVVDCSWEYSDTDTVNFSRAWQQVKNIILRNFAGDPQVGVSSPSVQHTLYLSEKQVLDVIPQVSVISMTMPNKHYFNFDTKPFQQIVPGDNNEVFIPVDKPHGTIYAQLARKNLNSHL.

Active-site charge relay system residues include Lys-33 and Thr-78. Thr-78, Asp-79, Phe-201, Arg-218, Val-266, Gln-267, and Asn-293 together coordinate urate. His-295 acts as the Charge relay system in catalysis. The Microbody targeting signal signature appears at 337–339; it reads SHL.

The protein belongs to the uricase family.

The protein localises to the peroxisome. It carries out the reaction urate + O2 + H2O = 5-hydroxyisourate + H2O2. It participates in purine metabolism; urate degradation; (S)-allantoin from urate: step 1/3. Its function is as follows. Catalyzes the oxidation of uric acid to 5-hydroxyisourate, which is further processed to form (S)-allantoin. The sequence is that of Uricase (Uro) from Drosophila subobscura (Fruit fly).